The primary structure comprises 339 residues: Glyceraldehyde-3-phosphate dehydrogenase (339 aa).

Residues 13 to 14, Asp-35, and Lys-84 contribute to the NAD(+) site; that span reads RI. Residues 156–158, Thr-187, 216–217, and Arg-239 each bind D-glyceraldehyde 3-phosphate; these read SCT and TG. Cys-157 (nucleophile) is an active-site residue. Position 321 (Asn-321) interacts with NAD(+).

The protein belongs to the glyceraldehyde-3-phosphate dehydrogenase family. Homotetramer.

The protein localises to the cytoplasm. The enzyme catalyses D-glyceraldehyde 3-phosphate + phosphate + NAD(+) = (2R)-3-phospho-glyceroyl phosphate + NADH + H(+). It functions in the pathway carbohydrate degradation; glycolysis; pyruvate from D-glyceraldehyde 3-phosphate: step 1/5. In Onchocerca volvulus, this protein is Glyceraldehyde-3-phosphate dehydrogenase.